Here is a 256-residue protein sequence, read N- to C-terminus: Thiazole synthase (256 aa).

Lys96 acts as the Schiff-base intermediate with DXP in catalysis. 1-deoxy-D-xylulose 5-phosphate-binding positions include Gly157, 184–185 (AG), and 206–207 (NT).

This sequence belongs to the ThiG family. Homotetramer. Forms heterodimers with either ThiH or ThiS.

The protein resides in the cytoplasm. The catalysed reaction is [ThiS sulfur-carrier protein]-C-terminal-Gly-aminoethanethioate + 2-iminoacetate + 1-deoxy-D-xylulose 5-phosphate = [ThiS sulfur-carrier protein]-C-terminal Gly-Gly + 2-[(2R,5Z)-2-carboxy-4-methylthiazol-5(2H)-ylidene]ethyl phosphate + 2 H2O + H(+). Its pathway is cofactor biosynthesis; thiamine diphosphate biosynthesis. Functionally, catalyzes the rearrangement of 1-deoxy-D-xylulose 5-phosphate (DXP) to produce the thiazole phosphate moiety of thiamine. Sulfur is provided by the thiocarboxylate moiety of the carrier protein ThiS. In vitro, sulfur can be provided by H(2)S. In Brucella canis (strain ATCC 23365 / NCTC 10854 / RM-666), this protein is Thiazole synthase.